The primary structure comprises 238 residues: Ribonuclease PH (238 aa).

Residues Arg86 and 124 to 126 (GTR) contribute to the phosphate site.

The protein belongs to the RNase PH family. Homohexameric ring arranged as a trimer of dimers.

It catalyses the reaction tRNA(n+1) + phosphate = tRNA(n) + a ribonucleoside 5'-diphosphate. Functionally, phosphorolytic 3'-5' exoribonuclease that plays an important role in tRNA 3'-end maturation. Removes nucleotide residues following the 3'-CCA terminus of tRNAs; can also add nucleotides to the ends of RNA molecules by using nucleoside diphosphates as substrates, but this may not be physiologically important. Probably plays a role in initiation of 16S rRNA degradation (leading to ribosome degradation) during starvation. The chain is Ribonuclease PH from Nitrosospira multiformis (strain ATCC 25196 / NCIMB 11849 / C 71).